A 290-amino-acid polypeptide reads, in one-letter code: Ribosomal RNA small subunit methyltransferase A (290 aa).

S-adenosyl-L-methionine-binding residues include Asn27, Leu29, Gly54, Glu75, Asp100, and Asn125.

This sequence belongs to the class I-like SAM-binding methyltransferase superfamily. rRNA adenine N(6)-methyltransferase family. RsmA subfamily.

It is found in the cytoplasm. The catalysed reaction is adenosine(1518)/adenosine(1519) in 16S rRNA + 4 S-adenosyl-L-methionine = N(6)-dimethyladenosine(1518)/N(6)-dimethyladenosine(1519) in 16S rRNA + 4 S-adenosyl-L-homocysteine + 4 H(+). Specifically dimethylates two adjacent adenosines (A1518 and A1519) in the loop of a conserved hairpin near the 3'-end of 16S rRNA in the 30S particle. May play a critical role in biogenesis of 30S subunits. This Streptococcus pneumoniae (strain Hungary19A-6) protein is Ribosomal RNA small subunit methyltransferase A.